The sequence spans 114 residues: Nucleoid-associated protein Amet_4780 (114 aa).

The tract at residues 23–42 is disordered; sequence QKMQKDMEKTQAALEEKEVE. A compositionally biased stretch (basic and acidic residues) spans 25–42; the sequence is MQKDMEKTQAALEEKEVE.

The protein belongs to the YbaB/EbfC family. Homodimer.

The protein localises to the cytoplasm. Its subcellular location is the nucleoid. Binds to DNA and alters its conformation. May be involved in regulation of gene expression, nucleoid organization and DNA protection. This is Nucleoid-associated protein Amet_4780 from Alkaliphilus metalliredigens (strain QYMF).